The following is an 83-amino-acid chain: Colicin-E5 immunity protein (83 aa).

Functionally, this protein is able to protect a cell, which harbors the plasmid ColE5 encoding colicin E5, against colicin E5. This Escherichia coli protein is Colicin-E5 immunity protein (imm).